Reading from the N-terminus, the 343-residue chain is Homeobox protein Hox-D13 (343 aa).

Disordered regions lie at residues 1-28 and 78-115; these read MSRAGSWDMDGLRADGGGAGGAPASSSS and GTSERTGSSSSSSSSAVVAARPEAPPAKECPAPTPAAA. The span at 85 to 115 shows a compositional bias: low complexity; it reads SSSSSSSSAVVAARPEAPPAKECPAPTPAAA. A DNA-binding region (homeobox) is located at residues 276-335; that stretch reads GRKKRVPYTKLQLKELENEYAINKFINKDKRRRISAATNLSERQVTIWFQNRRVKDKKIV.

Belongs to the Abd-B homeobox family.

It localises to the nucleus. In terms of biological role, sequence-specific transcription factor that binds gene promoters and activates their transcription. Part of a developmental regulatory system that provides cells with specific positional identities on the anterior-posterior axis. The polypeptide is Homeobox protein Hox-D13 (HOXD13) (Homo sapiens (Human)).